We begin with the raw amino-acid sequence, 1122 residues long: Receptor-type guanylate cyclase gcy-5 (1122 aa).

The N-terminal stretch at 1–19 (MRLLYFSMVLLWVLGASEC) is a signal peptide. Topologically, residues 20-486 (QVIPSSRRTL…CPVQFWDQYG (467 aa)) are extracellular. Residues N252, N299, N344, N350, N378, N434, and N439 are each glycosylated (N-linked (GlcNAc...) asparagine). The chain crosses the membrane as a helical span at residues 487–507 (VLIFVASIVLIFLICIMLMCF). At 508-1122 (GFMIRGRRAE…KSKMDTLKVV (615 aa)) the chain is on the cytoplasmic side. The interval 536 to 562 (QKEKRKPNSRRSLQSGPSTITGESKMT) is disordered. The Protein kinase domain maps to 542–830 (PNSRRSLQSG…NTNLMDHVFN (289 aa)). Positions 545-559 (RRSLQSGPSTITGES) are enriched in polar residues. The region spanning 888–1018 (TVLFSDVVKF…DTVNTASRME (131 aa)) is the Guanylate cyclase domain. The interval 1071–1122 (SDTKSLSTRTTPPITDENWPPQMKEDLKKRAVTPYPERQRSGKSKMDTLKVV) is disordered. Over residues 1074 to 1083 (KSLSTRTTPP) the composition is skewed to polar residues. A compositionally biased stretch (basic and acidic residues) spans 1107-1122 (ERQRSGKSKMDTLKVV).

It belongs to the adenylyl cyclase class-4/guanylyl cyclase family. In terms of tissue distribution, expressed in both ASEL and ASER neurons during early embryonic stages and becomes specifically expressed in ASER neuron in early larval stage.

The protein resides in the cell membrane. It carries out the reaction GTP = 3',5'-cyclic GMP + diphosphate. Guanylate cyclase involved in the production of the second messenger cGMP. Unlike other guanylate cyclases expressed in ASE neurons, may not play a role in chemotaxis responses to salt ions mediated by ASE sensory neurons. The protein is Receptor-type guanylate cyclase gcy-5 of Caenorhabditis elegans.